We begin with the raw amino-acid sequence, 197 residues long: Ribosome maturation factor RimP (197 aa).

Belongs to the RimP family.

The protein resides in the cytoplasm. Its function is as follows. Required for maturation of 30S ribosomal subunits. The chain is Ribosome maturation factor RimP from Acidovorax ebreus (strain TPSY) (Diaphorobacter sp. (strain TPSY)).